The chain runs to 339 residues: UDP-glucose 4-epimerase (339 aa).

NAD(+) is bound by residues 12-13, 32-37, 59-60, 81-85, N100, S125, Y150, K154, and F179; these read FI, DNLCNS, DI, and FAGLK. Positions 125 and 150 each coordinate substrate. The active-site Proton acceptor is Y150. Substrate is bound by residues N180, 200 to 201, 217 to 219, R232, and 293 to 296; these read NL, AVF, and RAGD.

Belongs to the NAD(P)-dependent epimerase/dehydratase family. As to quaternary structure, homodimer. NAD(+) is required as a cofactor.

The enzyme catalyses UDP-alpha-D-glucose = UDP-alpha-D-galactose. It functions in the pathway carbohydrate metabolism; galactose metabolism. Involved in the metabolism of galactose. Plays an essential role in the incorporation of galactose into meningococcal lipopolysaccharide surface molecules, which are important for pathogenesis. Catalyzes the conversion of UDP-galactose (UDP-Gal) to UDP-glucose (UDP-Glc) through a mechanism involving the transient reduction of NAD. The polypeptide is UDP-glucose 4-epimerase (galE) (Neisseria meningitidis serogroup C).